A 158-amino-acid polypeptide reads, in one-letter code: Cyclic pyranopterin monophosphate synthase (158 aa).

Residues 75 to 77 and 113 to 114 contribute to the substrate site; these read LCH and ME. D128 is an active-site residue.

The protein belongs to the MoaC family. In terms of assembly, homohexamer; trimer of dimers.

It catalyses the reaction (8S)-3',8-cyclo-7,8-dihydroguanosine 5'-triphosphate = cyclic pyranopterin phosphate + diphosphate. It functions in the pathway cofactor biosynthesis; molybdopterin biosynthesis. Catalyzes the conversion of (8S)-3',8-cyclo-7,8-dihydroguanosine 5'-triphosphate to cyclic pyranopterin monophosphate (cPMP). The protein is Cyclic pyranopterin monophosphate synthase of Actinobacillus pleuropneumoniae serotype 5b (strain L20).